Consider the following 570-residue polypeptide: Proline--tRNA ligase (570 aa).

It belongs to the class-II aminoacyl-tRNA synthetase family. ProS type 1 subfamily. Homodimer.

It localises to the cytoplasm. The catalysed reaction is tRNA(Pro) + L-proline + ATP = L-prolyl-tRNA(Pro) + AMP + diphosphate. Its function is as follows. Catalyzes the attachment of proline to tRNA(Pro) in a two-step reaction: proline is first activated by ATP to form Pro-AMP and then transferred to the acceptor end of tRNA(Pro). As ProRS can inadvertently accommodate and process non-cognate amino acids such as alanine and cysteine, to avoid such errors it has two additional distinct editing activities against alanine. One activity is designated as 'pretransfer' editing and involves the tRNA(Pro)-independent hydrolysis of activated Ala-AMP. The other activity is designated 'posttransfer' editing and involves deacylation of mischarged Ala-tRNA(Pro). The misacylated Cys-tRNA(Pro) is not edited by ProRS. The sequence is that of Proline--tRNA ligase from Shewanella pealeana (strain ATCC 700345 / ANG-SQ1).